Reading from the N-terminus, the 77-residue chain is U8-lycotoxin-Ls1d (77 aa).

The N-terminal stretch at 1–20 is a signal peptide; the sequence is MKLIIFTGLVLFAIVSLIEA. A propeptide spanning residues 21–26 is cleaved from the precursor; that stretch reads QAENEK.

The protein belongs to the neurotoxin 19 (CSTX) family. 08 (U8-Lctx) subfamily. In terms of processing, contains 4 disulfide bonds. In terms of tissue distribution, expressed by the venom gland.

It localises to the secreted. The chain is U8-lycotoxin-Ls1d from Lycosa singoriensis (Wolf spider).